We begin with the raw amino-acid sequence, 424 residues long: Virion nicking-joining enzyme (424 aa).

The protein belongs to the orthopoxvirus OPG042 family.

It is found in the virion. Its function is as follows. DNA nicking enzyme that cleaves extruded cruciform DNA at its tip. Probably nicks viral hairpins. The polypeptide is Virion nicking-joining enzyme (OPG042) (Cynomys gunnisoni (Gunnison's prairie dog)).